The following is a 260-amino-acid chain: Small ribosomal subunit protein eS1 (260 aa).

Residues 1-18 (MAVGKNKRISKGKKGGKK) show a composition bias toward basic residues. The disordered stretch occupies residues 1–22 (MAVGKNKRISKGKKGGKKKAAD).

The protein belongs to the eukaryotic ribosomal protein eS1 family. In terms of assembly, component of the small ribosomal subunit. Mature ribosomes consist of a small (40S) and a large (60S) subunit. The 40S subunit contains about 33 different proteins and 1 molecule of RNA (18S). The 60S subunit contains about 49 different proteins and 3 molecules of RNA (25S, 5.8S and 5S).

It is found in the cytoplasm. The sequence is that of Small ribosomal subunit protein eS1 from Helianthus annuus (Common sunflower).